The sequence spans 443 residues: ATP-dependent protease ATPase subunit HslU (443 aa).

ATP is bound by residues I18, G60–E65, D256, E321, and R393.

The protein belongs to the ClpX chaperone family. HslU subfamily. In terms of assembly, a double ring-shaped homohexamer of HslV is capped on each side by a ring-shaped HslU homohexamer. The assembly of the HslU/HslV complex is dependent on binding of ATP.

The protein resides in the cytoplasm. Functionally, ATPase subunit of a proteasome-like degradation complex; this subunit has chaperone activity. The binding of ATP and its subsequent hydrolysis by HslU are essential for unfolding of protein substrates subsequently hydrolyzed by HslV. HslU recognizes the N-terminal part of its protein substrates and unfolds these before they are guided to HslV for hydrolysis. In Photorhabdus laumondii subsp. laumondii (strain DSM 15139 / CIP 105565 / TT01) (Photorhabdus luminescens subsp. laumondii), this protein is ATP-dependent protease ATPase subunit HslU.